The sequence spans 383 residues: BRISC and BRCA1-A complex member 2 (383 aa).

N-acetylmethionine is present on Met-1. Residue Ser-2 is modified to Phosphoserine. 2 UEV-like regions span residues 30 to 147 (DATN…TLLE) and 275 to 364 (IAAF…RAKA).

The protein belongs to the BABAM2 family. In terms of assembly, component of the ARISC complex, at least composed of UIMC1/RAP80, ABRAXAS1, BRCC3/BRCC36, BABAM2 and BABAM1/NBA1. Component of the BRCA1-A complex, at least composed of BRCA1, BARD1, UIMC1/RAP80, ABRAXAS1, BRCC3/BRCC36, BABAM2 and BABAM1/NBA1. In the BRCA1-A complex, interacts directly with ABRAXAS1, BRCC3/BRCC36 and BABAM1/NBA1. Binds polyubiquitin. Component of the BRISC complex, at least composed of ABRAXAS2, BRCC3/BRCC36, BABAM2 and BABAM1/NBA1. Identified in a complex with SHMT2 and the other subunits of the BRISC complex. Component of the BRCA1/BRCA2 containing complex (BRCC), which also contains BRCA1, BRCA2, BARD1, BRCC3/BRCC36 and RAD51. BRCC is a ubiquitin E3 ligase complex that enhances cellular survival following DNA damage. May interact with FAS and TNFRSF1A. As to expression, expressed in all cell lines examined. Highly expressed in placenta.

The protein resides in the cytoplasm. It is found in the nucleus. Functionally, component of the BRCA1-A complex, a complex that specifically recognizes 'Lys-63'-linked ubiquitinated histones H2A and H2AX at DNA lesions sites, leading to target the BRCA1-BARD1 heterodimer to sites of DNA damage at double-strand breaks (DSBs). The BRCA1-A complex also possesses deubiquitinase activity that specifically removes 'Lys-63'-linked ubiquitin on histones H2A and H2AX. In the BRCA1-A complex, it acts as an adapter that bridges the interaction between BABAM1/NBA1 and the rest of the complex, thereby being required for the complex integrity and modulating the E3 ubiquitin ligase activity of the BRCA1-BARD1 heterodimer. Component of the BRISC complex, a multiprotein complex that specifically cleaves 'Lys-63'-linked ubiquitin in various substrates. Within the BRISC complex, acts as an adapter that bridges the interaction between BABAM1/NBA1 and the rest of the complex, thereby being required for the complex integrity. The BRISC complex is required for normal mitotic spindle assembly and microtubule attachment to kinetochores via its role in deubiquitinating NUMA1. The BRISC complex plays a role in interferon signaling via its role in the deubiquitination of the interferon receptor IFNAR1; deubiquitination increases IFNAR1 activity by enhancing its stability and cell surface expression. Down-regulates the response to bacterial lipopolysaccharide (LPS) via its role in IFNAR1 deubiquitination. May play a role in homeostasis or cellular differentiation in cells of neural, epithelial and germline origins. May also act as a death receptor-associated anti-apoptotic protein, which inhibits the mitochondrial apoptotic pathway. May regulate TNF-alpha signaling through its interactions with TNFRSF1A; however these effects may be indirect. The polypeptide is BRISC and BRCA1-A complex member 2 (Homo sapiens (Human)).